Reading from the N-terminus, the 159-residue chain is uncharacterized protein (159 aa).

Residues 7–151 (LLINYKTLEE…NPLIWEPAHI (145 aa)) enclose the N-acetyltransferase domain.

This is an uncharacterized protein from Bacillus pumilus (strain SAFR-032).